Reading from the N-terminus, the 419-residue chain is D-amino acid dehydrogenase (419 aa).

FAD is bound at residue 3-17; sequence VLVLGAGVAGVSSVW.

This sequence belongs to the DadA oxidoreductase family. It depends on FAD as a cofactor.

The catalysed reaction is a D-alpha-amino acid + A + H2O = a 2-oxocarboxylate + AH2 + NH4(+). The protein operates within amino-acid degradation; D-alanine degradation; NH(3) and pyruvate from D-alanine: step 1/1. In terms of biological role, oxidative deamination of D-amino acids. The polypeptide is D-amino acid dehydrogenase (Neisseria gonorrhoeae (strain ATCC 700825 / FA 1090)).